The chain runs to 77 residues: Early E3 9.0 kDa glycoprotein (77 aa).

Asn-7 carries an N-linked (GlcNAc...) asparagine; by host glycan. The helical transmembrane segment at 27-47 (ITILIVIGILILSVILYFIFC) threads the bilayer.

Belongs to the adenoviridae E3A-1 family.

It localises to the host nucleus membrane. The chain is Early E3 9.0 kDa glycoprotein from Human adenovirus B serotype 3 (HAdV-3).